A 208-amino-acid chain; its full sequence is Large ribosomal subunit protein uL3 (208 aa).

The disordered stretch occupies residues 130–168; the sequence is GGSKTHGQSDRLRAPGSVGGSSFPSRTFKGQRMAGRKGS.

It belongs to the universal ribosomal protein uL3 family. In terms of assembly, part of the 50S ribosomal subunit. Forms a cluster with proteins L14 and L19.

In terms of biological role, one of the primary rRNA binding proteins, it binds directly near the 3'-end of the 23S rRNA, where it nucleates assembly of the 50S subunit. The polypeptide is Large ribosomal subunit protein uL3 (Chloroherpeton thalassium (strain ATCC 35110 / GB-78)).